The sequence spans 270 residues: Undecaprenyl-diphosphatase 3 (270 aa).

Helical transmembrane passes span 5–25, 42–62, 89–109, 117–137, 192–212, 220–240, and 250–270; these read YYIL…PIPI, IEGF…VLLI, FFFI…GVLF, LKGV…LWII, FSFL…ITDI, TLFV…YISL, and GNLK…LIFL.

The protein belongs to the UppP family.

It localises to the cell membrane. The catalysed reaction is di-trans,octa-cis-undecaprenyl diphosphate + H2O = di-trans,octa-cis-undecaprenyl phosphate + phosphate + H(+). Catalyzes the dephosphorylation of undecaprenyl diphosphate (UPP). Confers resistance to bacitracin. In Bacillus anthracis, this protein is Undecaprenyl-diphosphatase 3.